A 179-amino-acid chain; its full sequence is Replication restart protein DnaT (179 aa).

The segment at 156-179 (GGLPKRDVNTVSEPDSQIPPGFRG) is disordered.

This sequence belongs to the DnaT family. In terms of assembly, homooligomerizes. Interacts with PriB. Component of the replication restart primosome. Primosome assembly occurs via a 'hand-off' mechanism. PriA binds to replication forks, subsequently PriB then DnaT bind; DnaT then displaces ssDNA to generate the helicase loading substrate.

In terms of biological role, involved in the restart of stalled replication forks, which reloads the replicative helicase on sites other than the origin of replication. Can function in multiple replication restart pathways. Displaces ssDNA from a PriB-ssDNA complex. Probably forms a spiral filament on ssDNA. The sequence is that of Replication restart protein DnaT from Escherichia coli O1:K1 / APEC.